The sequence spans 185 residues: Elongation factor P (185 aa).

Belongs to the elongation factor P family.

Its subcellular location is the cytoplasm. It participates in protein biosynthesis; polypeptide chain elongation. Functionally, involved in peptide bond synthesis. Stimulates efficient translation and peptide-bond synthesis on native or reconstituted 70S ribosomes in vitro. Probably functions indirectly by altering the affinity of the ribosome for aminoacyl-tRNA, thus increasing their reactivity as acceptors for peptidyl transferase. In Burkholderia mallei (strain NCTC 10247), this protein is Elongation factor P.